We begin with the raw amino-acid sequence, 303 residues long: Siderophore enterobactin esterase (303 aa).

Belongs to the esterase D family. As to quaternary structure, homodimer.

The catalysed reaction is enterobactin + 3 H2O = 3 N-(2,3-dihydroxybenzoyl)-L-serine + 2 H(+). In terms of biological role, displays specific enterobactin (ENB) esterase activity required for intracellular release of iron. Enterobactin is a xenosiderophore that is selectively produced by Gram-negative Enterobacteriaceae. The affinity for enterobactin is quite high, potentially due to the low natural abundance of this xenosiderophore in fungal habitats. Does not hydrolyze triacetylfusarinine C (TAFC). The protein is Siderophore enterobactin esterase of Emericella nidulans (strain FGSC A4 / ATCC 38163 / CBS 112.46 / NRRL 194 / M139) (Aspergillus nidulans).